Reading from the N-terminus, the 386-residue chain is O-methyltransferase 10 (386 aa).

S-adenosyl-L-homocysteine-binding residues include Ser-207, Gly-231, Asp-254, Asp-274, and Lys-288. Asp-254 is a binding site for S-adenosyl-L-methionine. His-292 (proton acceptor) is an active-site residue.

The protein belongs to the class I-like SAM-binding methyltransferase superfamily. Cation-independent O-methyltransferase family. In terms of assembly, homodimer.

The catalysed reaction is dopamine + S-adenosyl-L-methionine = 4-methoxytyramine + S-adenosyl-L-homocysteine + H(+). It catalyses the reaction 3,4-dihydroxy-5-methoxyphenethylamine + S-adenosyl-L-methionine = 3-hydroxy-4,5-dimethoxyphenethylamine + S-adenosyl-L-homocysteine + H(+). It carries out the reaction 3-hydroxy-4,5-dimethoxyphenethylamine + S-adenosyl-L-methionine = mescaline + S-adenosyl-L-homocysteine + H(+). The enzyme catalyses 4-hydroxy-3,5-dimethoxyphenethylamine + S-adenosyl-L-methionine = mescaline + S-adenosyl-L-homocysteine + H(+). The protein operates within aromatic compound metabolism. Its pathway is alkaloid biosynthesis. O-methyltransferase participating in the biosynthesis of natural products derived from phenylethylamine, including mescaline, a natural hallucinogen potentially used in psychotherapeutic treatments. Catalyzes the O-methylation of mescaline para hydroxyl groups, using dopamine, 3,4-dihydroxy-5-methoxyphenethylamine, 3-hydroxy-4,5-dimethoxyphenethylamine and 4-hydroxy-3,5-dimethoxyphenethylamine as substrates. This chain is O-methyltransferase 10, found in Lophophora williamsii (Peyote).